We begin with the raw amino-acid sequence, 133 residues long: Small ribosomal subunit protein uS19 (133 aa).

This sequence belongs to the universal ribosomal protein uS19 family.

Its function is as follows. Protein S19 forms a complex with S13 that binds strongly to the 16S ribosomal RNA. The sequence is that of Small ribosomal subunit protein uS19 from Thermococcus onnurineus (strain NA1).